Here is a 338-residue protein sequence, read N- to C-terminus: DNA-directed RNA polymerase subunit alpha (338 aa).

The alpha N-terminal domain (alpha-NTD) stretch occupies residues 1–225; that stretch reads MLISQRPTLT…ELFGLARELN (225 aa). The interval 242–338 is alpha C-terminal domain (alpha-CTD); the sequence is YIAAYGMPIE…YIDTDPEETE (97 aa). Positions 314-338 are disordered; sequence FDPTQLDGYDAATGDYIDTDPEETE.

Belongs to the RNA polymerase alpha chain family. Homodimer. The RNAP catalytic core consists of 2 alpha, 1 beta, 1 beta' and 1 omega subunit. When a sigma factor is associated with the core the holoenzyme is formed, which can initiate transcription.

It catalyses the reaction RNA(n) + a ribonucleoside 5'-triphosphate = RNA(n+1) + diphosphate. Its function is as follows. DNA-dependent RNA polymerase catalyzes the transcription of DNA into RNA using the four ribonucleoside triphosphates as substrates. This Corynebacterium diphtheriae (strain ATCC 700971 / NCTC 13129 / Biotype gravis) protein is DNA-directed RNA polymerase subunit alpha.